Reading from the N-terminus, the 291-residue chain is ATP synthase gamma chain 2 (291 aa).

The interval 187–208 (LLPHPDKDESQDSKPNDATSRW) is disordered. The segment covering 190–201 (HPDKDESQDSKP) has biased composition (basic and acidic residues).

This sequence belongs to the ATPase gamma chain family. In terms of assembly, F-type ATPases have 2 components, CF(1) - the catalytic core - and CF(0) - the membrane proton channel. CF(1) has five subunits: alpha(3), beta(3), gamma(1), delta(1), epsilon(1). CF(0) has three main subunits: a, b and c.

It localises to the cell inner membrane. Its function is as follows. Produces ATP from ADP in the presence of a proton gradient across the membrane. The gamma chain is believed to be important in regulating ATPase activity and the flow of protons through the CF(0) complex. This Photobacterium profundum (strain SS9) protein is ATP synthase gamma chain 2.